A 507-amino-acid chain; its full sequence is 2,3-bisphosphoglycerate-independent phosphoglycerate mutase (507 aa).

Mn(2+) is bound by residues Asp11 and Ser61. Ser61 serves as the catalytic Phosphoserine intermediate. Substrate-binding positions include His122, 150–151 (RD), Arg182, Arg188, 257–260 (RPDR), and Lys332. The Mn(2+) site is built by Asp397, His401, Asp438, His439, and His456.

The protein belongs to the BPG-independent phosphoglycerate mutase family. Monomer. Mn(2+) is required as a cofactor.

The catalysed reaction is (2R)-2-phosphoglycerate = (2R)-3-phosphoglycerate. It participates in carbohydrate degradation; glycolysis; pyruvate from D-glyceraldehyde 3-phosphate: step 3/5. Its function is as follows. Catalyzes the interconversion of 2-phosphoglycerate and 3-phosphoglycerate. The chain is 2,3-bisphosphoglycerate-independent phosphoglycerate mutase from Mycoplasma genitalium (strain ATCC 33530 / DSM 19775 / NCTC 10195 / G37) (Mycoplasmoides genitalium).